Here is a 249-residue protein sequence, read N- to C-terminus: ATP synthase subunit a, chloroplastic (249 aa).

5 helical membrane passes run 40–60, 97–117, 136–156, 201–221, and 222–242; these read QVLI…VLAI, VPFI…GALL, INTT…AGLS, LVVV…VMFL, and GLFT…AYIG.

This sequence belongs to the ATPase A chain family. In terms of assembly, F-type ATPases have 2 components, CF(1) - the catalytic core - and CF(0) - the membrane proton channel. CF(1) has five subunits: alpha(3), beta(3), gamma(1), delta(1), epsilon(1). CF(0) has four main subunits: a, b, b' and c.

The protein resides in the plastid. It is found in the chloroplast thylakoid membrane. Its function is as follows. Key component of the proton channel; it plays a direct role in the translocation of protons across the membrane. The chain is ATP synthase subunit a, chloroplastic from Nasturtium officinale (Watercress).